Reading from the N-terminus, the 262-residue chain is Small ribosomal subunit protein eS1 (262 aa).

The protein belongs to the eukaryotic ribosomal protein eS1 family. As to quaternary structure, component of the small ribosomal subunit. Mature ribosomes consist of a small (40S) and a large (60S) subunit. The 40S subunit contains about 33 different proteins and 1 molecule of RNA (18S). The 60S subunit contains about 49 different proteins and 3 molecules of RNA (25S, 5.8S and 5S).

It localises to the cytoplasm. This Plasmodium knowlesi (strain H) protein is Small ribosomal subunit protein eS1.